The chain runs to 486 residues: Ribosome biogenesis protein YTM1 (486 aa).

The interval 12–99 (RQLPINLFTR…ESQIDVEYVR (88 aa)) is ubiquitin-like (UBL) domain. 5 WD repeats span residues 212-251 (GHTGPISSVIASSSGKEIVTGSWDGNINLYVLPDAEPTEH), 305-345 (GHTG…AGAL), 349-388 (PFDKSALCVDQWKMNGTLATGNMDRTICLWDTRQATSLIS), 392-432 (PTTS…TALF), and 454-486 (VLGERLLAVDWNGEVLVAGGEDGEVGIWRARGE). Positions 249-299 (TEHQVPADPVSYLPGQGTKKRRKLEKDQEKAPIEGLTDGDATGEGGWRRAP) are disordered.

This sequence belongs to the WD repeat WDR12/YTM1 family. Component of the NOP7 complex, composed of ERB1, NOP7 and YTM1. The complex is held together by ERB1, which interacts with NOP7 via its N-terminal domain and with YTM1 via a high-affinity interaction between the seven-bladed beta-propeller domains of the 2 proteins. The NOP7 complex associates with the 66S pre-ribosome. Interacts (via UBL domain) with MDN1 (via VWFA/MIDAS domain).

Its subcellular location is the nucleus. The protein resides in the nucleolus. The protein localises to the nucleoplasm. Component of the NOP7 complex, which is required for maturation of the 25S and 5.8S ribosomal RNAs and formation of the 60S ribosome. The protein is Ribosome biogenesis protein YTM1 of Cryptococcus neoformans var. neoformans serotype D (strain B-3501A) (Filobasidiella neoformans).